The following is a 66-amino-acid chain: Probable Sec-independent protein translocase protein TatE (66 aa).

Residues 1–21 (MEGISITKLLVIAVLIVLLFG) traverse the membrane as a helical segment. Positions 46–66 (ETPAAKKSDGVEAAPRVENKE) are disordered.

Belongs to the TatA/E family. TatE subfamily.

It localises to the cell inner membrane. Its function is as follows. Part of the twin-arginine translocation (Tat) system that transports large folded proteins containing a characteristic twin-arginine motif in their signal peptide across membranes. TatE shares overlapping functions with TatA. In Edwardsiella ictaluri (strain 93-146), this protein is Probable Sec-independent protein translocase protein TatE.